The sequence spans 1237 residues: GTPase activating protein BUD2 (1237 aa).

Low complexity predominate over residues 79–110 (GSGKSSISQPPPTTSTRRNLLRKSSNLNSSDQ). The disordered stretch occupies residues 79-124 (GSGKSSISQPPPTTSTRRNLLRKSSNLNSSDQSHSKSSEDNEHQPP). Over residues 111–121 (SHSKSSEDNEH) the composition is skewed to basic and acidic residues. The C2 domain occupies 381–503 (NVEHPQLYDF…KQIKTTSTIM (123 aa)). The region spanning 637 to 905 (NSQDQAVSNS…PEIYDYFDKL (269 aa)) is the Ras-GAP domain. Disordered regions lie at residues 721 to 762 (SIHE…ERER) and 969 to 1007 (NNNG…PDLD). A compositionally biased stretch (acidic residues) spans 735–754 (DVSDDDDDDDDNSSDDDADY). A compositionally biased stretch (basic and acidic residues) spans 986-996 (RDMEREQDRSR). A coiled-coil region spans residues 1065-1093 (NITLKDIQKQSTKIMNKIQELEIYLENYE). A disordered region spans residues 1170–1204 (NGGMGNRNGHDVNGHNNNNNNNNNNTGDGYNETDR). Positions 1183–1199 (GHNNNNNNNNNNTGDGY) are enriched in low complexity.

It localises to the cytoplasm. The protein localises to the cell cortex. The protein resides in the cell tip. Its subcellular location is the cell septum. In terms of biological role, GTPase activating protein (GAP) for RSR1 which is involved in the polarization of yeast and hyphal cells. Directs the site of new daughter cell growth in yeast and hyphal cells. Important for hyphae to maintain linear growth and necessary for hyphal responses to directional cues in the environment (tropisms). Required for correct localization of the septin rings and stabilization of the polarisome at hyphal tips. Involved in cell adhesion. This Candida albicans (strain SC5314 / ATCC MYA-2876) (Yeast) protein is GTPase activating protein BUD2 (BUD2).